Consider the following 150-residue polypeptide: Large ribosomal subunit protein bL9 (150 aa).

The protein belongs to the bacterial ribosomal protein bL9 family.

Binds to the 23S rRNA. The polypeptide is Large ribosomal subunit protein bL9 (Streptococcus equi subsp. zooepidemicus (strain MGCS10565)).